A 196-amino-acid polypeptide reads, in one-letter code: Pentatricopeptide repeat-containing protein At1g62350 (196 aa).

PPR repeat units follow at residues 70 to 104 (DMFF…EVLF) and 105 to 139 (DQHT…PDRP).

It belongs to the PPR family. P subfamily.

This chain is Pentatricopeptide repeat-containing protein At1g62350, found in Arabidopsis thaliana (Mouse-ear cress).